The sequence spans 192 residues: CASP-like protein 4C1 (192 aa).

Residues 1–11 are compositionally biased toward polar residues; it reads MRSPQSLRNGE. Residues 1–23 form a disordered region; the sequence is MRSPQSLRNGETPSPSPRPPRFP. Over 1 to 40 the chain is Cytoplasmic; the sequence is MRSPQSLRNGETPSPSPRPPRFPTPHFHSTVSLQKLKRFN. Pro residues predominate over residues 14-23; that stretch reads SPSPRPPRFP. A helical transmembrane segment spans residues 41–61; sequence LLILVFRLSTFCFSLASSVFM. At 62 to 75 the chain is on the extracellular side; sequence LTNPTWYHFDAFRY. A helical transmembrane segment spans residues 76–96; it reads VFAANAIVAIYSLFEMAASVW. The Cytoplasmic segment spans residues 97–107; that stretch reads EISRGNTLFPE. A helical transmembrane segment spans residues 108–128; sequence ILQVWFDFGHDQVFAYLLLSA. The Extracellular segment spans residues 129-156; the sequence is DSAATALAKTLKGGDTCAASNAFCVQSY. A helical membrane pass occupies residues 157–177; sequence IAIALGFAGFLFLGLSSLLSG. The Cytoplasmic segment spans residues 178–192; sequence FRVVCFLINGSRFYV.

The protein belongs to the Casparian strip membrane proteins (CASP) family. As to quaternary structure, homodimer and heterodimers.

It is found in the cell membrane. This chain is CASP-like protein 4C1, found in Ricinus communis (Castor bean).